The sequence spans 1157 residues: Peroxisomal ATPase PEX1 (1157 aa).

Disordered stretches follow at residues 187–221 (SISS…NNGE) and 1135–1157 (SGRD…STLM). Over residues 205–217 (SSTSTATGRRSVT) the composition is skewed to low complexity.

The protein belongs to the AAA ATPase family. As to quaternary structure, interacts with PEX6; forming the PEX1-PEX6 AAA ATPase complex, which is composed of a heterohexamer formed by a trimer of PEX1-PEX6 dimers.

The protein resides in the membrane. The catalysed reaction is ATP + H2O = ADP + phosphate + H(+). Its function is as follows. Component of the PEX1-PEX6 AAA ATPase complex involved in peroxisome biosynthesis. The complex acts as a protein dislocase complex that mediates the ATP-dependent extraction of the PEX5 receptor from peroxisomal membranes, an essential step for PEX5 recycling. Specifically recognizes PEX5 monoubiquitinated at 'Cys-6', and pulls it out of the peroxisome lumen through the PEX2-PEX10-PEX12 retrotranslocation channel. Extraction by the PEX1-PEX6 AAA ATPase complex is accompanied by unfolding of the TPR repeats and release of bound cargo from PEX5. This is Peroxisomal ATPase PEX1 from Komagataella pastoris (Yeast).